A 528-amino-acid polypeptide reads, in one-letter code: MPMSLGNAFIKNFLGKAPDWYKVAIIAFLIINPIVFFLIDPFVAGWLLVAEFIFTLAMALKCYPLQPGGLLAIEAVAIGMTSPAQVKHELVANIEVLLLLVFMVAGIYFMKQLLLFIFTKILLGIRSKTLLSLAFCFAAAFLSAFLDALTVIAVVISVAVGFYSIYHKVASGNPIGDHDHTQDDTITELTRDDLENYRAFLRSLLMHAGVGTALGGVTTMVGEPQNLIIADQAGWFFGEFLIRMAPVTLPVFFCGLITCAIVEKLKICGYGAQLPDNVRQILVDFDREERKTRTNQDVAKLWIQGLIAVWLIAALALHLAAVGLIGLSVIILATSFTGVIEEHSMGKAFEEALPFTALLAVFFAVVAVIIDQELFKPVIDAVLAVEDKSTQLALFYVANGLLSMVSDNVFVGTVYINEVKAALIDGQITREQFDLLAVAINTGTNLPSVATPNGQAAFLFLLTSALAPLIRLSYGRMVIMALPYTIVLAIVGLMGIMFFLEPATAFFYDAGWISPSSGDLAPVVSGGH.

Helical transmembrane passes span 23 to 43 (VAII…DPFV), 45 to 65 (GWLL…CYPL), 90 to 110 (LVAN…IYFM), 136 to 156 (CFAA…AVVI), 204 to 224 (LLMH…VGEP), 242 to 262 (IRMA…CAIV), 305 to 325 (GLIA…VGLI), 350 to 370 (EEAL…AVII), 392 to 412 (LALF…VFVG), 450 to 470 (ATPN…APLI), and 479 to 499 (IMAL…IMFF).

It belongs to the NhaB Na(+)/H(+) (TC 2.A.34) antiporter family.

The protein resides in the cell inner membrane. The enzyme catalyses 2 Na(+)(in) + 3 H(+)(out) = 2 Na(+)(out) + 3 H(+)(in). Na(+)/H(+) antiporter that extrudes sodium in exchange for external protons. The chain is Na(+)/H(+) antiporter NhaB from Vibrio campbellii (strain ATCC BAA-1116).